The sequence spans 918 residues: Isoleucine--tRNA ligase (918 aa).

The short motif at 57–67 is the 'HIGH' region element; it reads PYANGHIHIGH. Glutamate 564 contributes to the L-isoleucyl-5'-AMP binding site. The 'KMSKS' region signature appears at 605–609; sequence KMSKS. An ATP-binding site is contributed by lysine 608. The Zn(2+) site is built by cysteine 888, cysteine 891, cysteine 903, and cysteine 906.

This sequence belongs to the class-I aminoacyl-tRNA synthetase family. IleS type 1 subfamily. As to quaternary structure, monomer. Zn(2+) serves as cofactor.

It localises to the cytoplasm. The catalysed reaction is tRNA(Ile) + L-isoleucine + ATP = L-isoleucyl-tRNA(Ile) + AMP + diphosphate. Its function is as follows. Catalyzes the attachment of isoleucine to tRNA(Ile). As IleRS can inadvertently accommodate and process structurally similar amino acids such as valine, to avoid such errors it has two additional distinct tRNA(Ile)-dependent editing activities. One activity is designated as 'pretransfer' editing and involves the hydrolysis of activated Val-AMP. The other activity is designated 'posttransfer' editing and involves deacylation of mischarged Val-tRNA(Ile). This Nitratiruptor sp. (strain SB155-2) protein is Isoleucine--tRNA ligase.